The following is a 1494-amino-acid chain: ABC multidrug transporter atrG (1494 aa).

The span at 1-11 (MSLLGTINPNL) shows a compositional bias: polar residues. 2 disordered regions span residues 1 to 48 (MSLL…RTSD) and 84 to 105 (FSVS…TLNP). Residue N41 is glycosylated (N-linked (GlcNAc...) asparagine). Residues N141 and N340 are each glycosylated (N-linked (GlcNAc...) asparagine). Residues 162–416 (LQVGALFRAV…FTTMGFECPE (255 aa)) form the ABC transporter 1 domain. The next 2 helical transmembrane spans lie at 527–547 (LTMS…SVFY) and 561–581 (ALLF…ILTL). N622 is a glycosylation site (N-linked (GlcNAc...) asparagine). 3 helical membrane-spanning segments follow: residues 636 to 656 (GPFF…SMLF), 669 to 689 (ALVP…FTIP), and 778 to 798 (GIMF…TEYI). Residue N835 is glycosylated (N-linked (GlcNAc...) asparagine). The ABC transporter 2 domain occupies 852–1095 (FHWQDVCYDI…LASYFERNGA (244 aa)). 888-895 (GVSGAGKT) serves as a coordination point for ATP. Helical transmembrane passes span 1191-1211 (YIYS…FSFF), 1227-1247 (IFML…NFVT), 1276-1296 (LPWN…PIGL), 1312-1332 (LMWL…HMMI), and 1351-1371 (LCLI…FWIF). 2 N-linked (GlcNAc...) asparagine glycosylation sites follow: N1410 and N1432. The chain crosses the membrane as a helical span at residues 1463–1483 (FGIMWAFIVFNIAAAVFIYWL).

It belongs to the ABC transporter superfamily. ABCG family. PDR (TC 3.A.1.205) subfamily.

The protein localises to the cell membrane. The catalysed reaction is (R)-miconazole(in) + ATP + H2O = (R)-miconazole(out) + ADP + phosphate + H(+). Pleiotropic ABC efflux transporter involved in the basal level of azole susceptibility. Confers resistance to miconazole and clotrimazole. This chain is ABC multidrug transporter atrG, found in Aspergillus oryzae (strain ATCC 42149 / RIB 40) (Yellow koji mold).